We begin with the raw amino-acid sequence, 192 residues long: A-type ATP synthase subunit E (192 aa).

The protein belongs to the V-ATPase E subunit family. Has multiple subunits with at least A(3), B(3), C, D, E, F, H, I and proteolipid K(x).

It localises to the cell membrane. Component of the A-type ATP synthase that produces ATP from ADP in the presence of a proton gradient across the membrane. The protein is A-type ATP synthase subunit E of Methanocorpusculum labreanum (strain ATCC 43576 / DSM 4855 / Z).